Consider the following 242-residue polypeptide: NADPH-dependent pterin aldehyde reductase (242 aa).

Position 2 is an N-acetylthreonine (threonine 2). Leucine 21 to serine 50 provides a ligand contact to NADP(+). Serine 153 contributes to the substrate binding site. Residue tyrosine 166 is the Proton acceptor of the active site. Residue lysine 170 coordinates NADP(+).

The protein belongs to the short-chain dehydrogenases/reductases (SDR) family. As to quaternary structure, homodimer. As to expression, mostly expressed in seeds, and, to a lower extent, in roots, leaves, flowers and siliques.

It localises to the cytoplasm. Functionally, NADPH-dependent pterin aldehyde reductase involved in pterin aldehyde salvage during folate turnover. Catalyzes the reduction of diverse aromatic and aliphatic aldehydes (e.g. acetaldehyde, n-propanal, 1-naphthaldehyde, benzaldehyde, cinnamaldehyde, n-butanal, n-hexanal, n-pentanal, 2-naphthaldehyde, n-octanal, n-nonanal and n-heptanal), in addition to the conversion of pterin-6-aldehyde (PtCHO) to 6-hydroxymethylpterin (PtCH(2)OH), and the conversion of dihydropterin-6-aldehyde (H(2)PtCHO) to 6-hydroxymethyldihydropterin (H(2)PtCH(2)OH). Cannot reduce the pterin ring. The protein is NADPH-dependent pterin aldehyde reductase of Arabidopsis thaliana (Mouse-ear cress).